A 246-amino-acid polypeptide reads, in one-letter code: E3 ubiquitin ligase TRIM40 (246 aa).

The RING-type zinc finger occupies 12-55; the sequence is CPICLDPLKEAVSTDCRHLFCRMCLTQHMDKASVSGILSCPVCR. Residues 64–105 form a B box-type zinc finger; sequence GDNYICHTHQKRVRRFCEASGHLLCEECLQSPEHQSHTELSI. 4 residues coordinate Zn(2+): Cys69, His72, Cys91, and His97. Positions 105–170 form a coiled coil; it reads IENAISHYKE…DQTKEQLKAL (66 aa).

Belongs to the TRIM/RBCC family. In terms of assembly, interacts with NEDD8.

It carries out the reaction S-ubiquitinyl-[E2 ubiquitin-conjugating enzyme]-L-cysteine + [acceptor protein]-L-lysine = [E2 ubiquitin-conjugating enzyme]-L-cysteine + N(6)-ubiquitinyl-[acceptor protein]-L-lysine.. E3 ubiquitin-protein ligase that plays a role in the limitation of the innate immune response. Mediates inhibition of the RLR signaling pathway by ubiquitinating RIGI and IFIH1 receptors, leading to their proteasomal degradation. Also promotes the neddylation of IKBKG/NEMO, stabilizing NFKBIA, and thereby inhibiting of NF-kappa-B nuclear translocation and activation. The protein is E3 ubiquitin ligase TRIM40 (Trim40) of Mus musculus (Mouse).